An 86-amino-acid polypeptide reads, in one-letter code: Small ribosomal subunit protein bS20 (86 aa).

This sequence belongs to the bacterial ribosomal protein bS20 family.

In terms of biological role, binds directly to 16S ribosomal RNA. The sequence is that of Small ribosomal subunit protein bS20 from Rhodococcus erythropolis (strain PR4 / NBRC 100887).